Consider the following 236-residue polypeptide: Urease accessory protein UreG 2 (236 aa).

Positions 1 to 40 (MEASVHIGNSVPHAHLHSAAPARPADPVRPDGSRRALRIG) are disordered. 43 to 50 (GPVGSGKT) contacts GTP.

Belongs to the SIMIBI class G3E GTPase family. UreG subfamily. In terms of assembly, homodimer. UreD, UreF and UreG form a complex that acts as a GTP-hydrolysis-dependent molecular chaperone, activating the urease apoprotein by helping to assemble the nickel containing metallocenter of UreC. The UreE protein probably delivers the nickel.

The protein resides in the cytoplasm. Functionally, facilitates the functional incorporation of the urease nickel metallocenter. This process requires GTP hydrolysis, probably effectuated by UreG. This Saccharopolyspora erythraea (strain ATCC 11635 / DSM 40517 / JCM 4748 / NBRC 13426 / NCIMB 8594 / NRRL 2338) protein is Urease accessory protein UreG 2.